The following is a 476-amino-acid chain: Glycogen synthase (476 aa).

Lys-15 lines the ADP-alpha-D-glucose pocket.

Belongs to the glycosyltransferase 1 family. Bacterial/plant glycogen synthase subfamily.

It carries out the reaction [(1-&gt;4)-alpha-D-glucosyl](n) + ADP-alpha-D-glucose = [(1-&gt;4)-alpha-D-glucosyl](n+1) + ADP + H(+). The protein operates within glycan biosynthesis; glycogen biosynthesis. Its function is as follows. Synthesizes alpha-1,4-glucan chains using ADP-glucose. This is Glycogen synthase from Bacillus cereus (strain Q1).